Reading from the N-terminus, the 451-residue chain is DNA-directed RNA polymerase subunit Rpo1C (451 aa).

The unknown stretch occupies residues 1-68; that stretch reads MQDIIGKIED…DDDELLDAVE (68 aa). The interval 69–451 is DNA-directed RNA polymerase subunit Rpo1C; it reads DDYQRILKVQ…SVSVVMKERK (383 aa).

Belongs to the RNA polymerase beta' chain family. Part of the RNA polymerase complex.

The protein resides in the cytoplasm. The catalysed reaction is RNA(n) + a ribonucleoside 5'-triphosphate = RNA(n+1) + diphosphate. Functionally, DNA-dependent RNA polymerase (RNAP) catalyzes the transcription of DNA into RNA using the four ribonucleoside triphosphates as substrates. Forms part of the jaw domain. The sequence is that of DNA-directed RNA polymerase subunit Rpo1C from Methanothermobacter thermautotrophicus (strain ATCC 29096 / DSM 1053 / JCM 10044 / NBRC 100330 / Delta H) (Methanobacterium thermoautotrophicum).